A 119-amino-acid polypeptide reads, in one-letter code: Large ribosomal subunit protein uL22 (119 aa).

This sequence belongs to the universal ribosomal protein uL22 family. In terms of assembly, part of the 50S ribosomal subunit.

In terms of biological role, this protein binds specifically to 23S rRNA; its binding is stimulated by other ribosomal proteins, e.g. L4, L17, and L20. It is important during the early stages of 50S assembly. It makes multiple contacts with different domains of the 23S rRNA in the assembled 50S subunit and ribosome. Its function is as follows. The globular domain of the protein is located near the polypeptide exit tunnel on the outside of the subunit, while an extended beta-hairpin is found that lines the wall of the exit tunnel in the center of the 70S ribosome. In Rickettsia felis (strain ATCC VR-1525 / URRWXCal2) (Rickettsia azadi), this protein is Large ribosomal subunit protein uL22.